Reading from the N-terminus, the 35-residue chain is 3-hydroxyisobutyrate dehydrogenase (35 aa).

4–33 (TPVGFIGLGNMGNPMAKNLMKHGYPLIIYD) is a binding site for NAD(+). Position 24 is an N6-acetyllysine; alternate (K24). K24 carries the post-translational modification N6-succinyllysine; alternate.

It belongs to the HIBADH-related family. 3-hydroxyisobutyrate dehydrogenase subfamily. As to quaternary structure, homodimer.

The protein localises to the mitochondrion. It catalyses the reaction 3-hydroxy-2-methylpropanoate + NAD(+) = 2-methyl-3-oxopropanoate + NADH + H(+). Its pathway is amino-acid degradation; L-valine degradation. The sequence is that of 3-hydroxyisobutyrate dehydrogenase (HIBADH) from Oryctolagus cuniculus (Rabbit).